The primary structure comprises 166 residues: Ribosome maturation factor RimP (166 aa).

The protein belongs to the RimP family.

It localises to the cytoplasm. Its function is as follows. Required for maturation of 30S ribosomal subunits. In Psychrobacter arcticus (strain DSM 17307 / VKM B-2377 / 273-4), this protein is Ribosome maturation factor RimP.